The primary structure comprises 316 residues: Beta-ketoacyl-[acyl-carrier-protein] synthase III 1 (316 aa).

Active-site residues include cysteine 112 and histidine 243. Residues 244 to 248 form an ACP-binding region; it reads QANYR. Residue asparagine 273 is part of the active site.

This sequence belongs to the thiolase-like superfamily. FabH family. In terms of assembly, homodimer.

The protein resides in the cytoplasm. It carries out the reaction malonyl-[ACP] + acetyl-CoA + H(+) = 3-oxobutanoyl-[ACP] + CO2 + CoA. The protein operates within lipid metabolism; fatty acid biosynthesis. Catalyzes the condensation reaction of fatty acid synthesis by the addition to an acyl acceptor of two carbons from malonyl-ACP. Catalyzes the first condensation reaction which initiates fatty acid synthesis and may therefore play a role in governing the total rate of fatty acid production. Possesses both acetoacetyl-ACP synthase and acetyl transacylase activities. Its substrate specificity determines the biosynthesis of branched-chain and/or straight-chain of fatty acids. This is Beta-ketoacyl-[acyl-carrier-protein] synthase III 1 from Vibrio parahaemolyticus serotype O3:K6 (strain RIMD 2210633).